The chain runs to 209 residues: Ribonuclease HII (209 aa).

Residues Asp20 to Ile209 form the RNase H type-2 domain. A divalent metal cation contacts are provided by Asp26, Glu27, and Asp122.

The protein belongs to the RNase HII family. Mn(2+) serves as cofactor. Requires Mg(2+) as cofactor.

Its subcellular location is the cytoplasm. It catalyses the reaction Endonucleolytic cleavage to 5'-phosphomonoester.. Endonuclease that specifically degrades the RNA of RNA-DNA hybrids. In Prochlorococcus marinus subsp. pastoris (strain CCMP1986 / NIES-2087 / MED4), this protein is Ribonuclease HII.